The chain runs to 703 residues: Lethal(3)malignant brain tumor-like protein 2 (703 aa).

The interval 1–85 is disordered; that stretch reads MEKPRGTEEA…NNRSLDGSGS (85 aa). At Ser13 the chain carries Phosphoserine. The span at 15–25 shows a compositional bias: acidic residues; the sequence is PMEEEEEDDLD. Positions 35 to 49 are enriched in low complexity; that stretch reads SYNSSAGSESSSYLE. Positions 50-60 are enriched in acidic residues; sequence ESSEAENEDRE. Ser67 carries the phosphoserine modification. Over residues 73–82 the composition is skewed to polar residues; the sequence is SSANNRSLDG. The FCS-type zinc finger occupies 81 to 116; it reads DGSGSEPAVCEMCGIVGTREAFFSKTKRFCSVSCSR. Positions 90, 93, 110, and 114 each coordinate Zn(2+). MBT repeat units follow at residues 179-283, 291-391, 397-500, and 508-604; these read FDWG…LVPP, TDWK…IKMS, MSHH…LTPP, and FAWE…LQPP. Phosphoserine is present on Ser338. Residue Lys405 forms a Glycyl lysine isopeptide (Lys-Gly) (interchain with G-Cter in SUMO2) linkage. The interval 604-649 is disordered; the sequence is PVSAEPNTPQKGKDTTKKKKKQFGKKRKRIPSAKTRPLRQGSKKPL. Residues 619–634 are compositionally biased toward basic residues; sequence TKKKKKQFGKKRKRIP. Glycyl lysine isopeptide (Lys-Gly) (interchain with G-Cter in SUMO2) cross-links involve residues Lys647 and Lys673. A disordered region spans residues 675–703; that stretch reads EHQDISSLDRSPSPQLPLPIESIKQERNN. Ser681, Ser685, and Ser687 each carry phosphoserine. A Glycyl lysine isopeptide (Lys-Gly) (interchain with G-Cter in SUMO1); alternate cross-link involves residue Lys698. Lys698 participates in a covalent cross-link: Glycyl lysine isopeptide (Lys-Gly) (interchain with G-Cter in SUMO2); alternate.

Part of the E2F6.com-1 complex in G0 phase composed of E2F6, MGA, MAX, TFDP1, CBX3, BAT8, EUHMTASE1, RING1, RNF2, MBLR, BAT8 and YAF2. Phosphorylated. As to expression, ubiquitous.

It localises to the nucleus. Functionally, putative Polycomb group (PcG) protein. PcG proteins maintain the transcriptionally repressive state of genes, probably via a modification of chromatin, rendering it heritably changed in its expressibility. Its association with a chromatin-remodeling complex suggests that it may contribute to prevent expression of genes that trigger the cell into mitosis. Binds to monomethylated and dimethylated 'Lys-20' on histone H4. Binds histone H3 peptides that are monomethylated or dimethylated on 'Lys-4', 'Lys-9' or 'Lys-27'. The sequence is that of Lethal(3)malignant brain tumor-like protein 2 (L3mbtl2) from Mus musculus (Mouse).